Consider the following 476-residue polypeptide: Rifampicin monooxygenase (476 aa).

Positions 12, 31, 32, 98, 122, and 156 each coordinate FAD. The rifampicin site is built by Arg196 and Arg213. FAD-binding residues include Asp277, Leu290, and Asn291.

It belongs to the rifampicin monooxygenase family. Requires FAD as cofactor.

It catalyses the reaction rifampicin + NADPH + O2 = rifampicin para-naphthoquinone carboxamide + NADP(+) + H2O + H(+). The enzyme catalyses rifampicin + NADH + O2 = rifampicin para-naphthoquinone carboxamide + NAD(+) + H2O + H(+). It carries out the reaction rifamycin SV + NADPH + O2 = rifamycin SV para-naphthoquinone carboxamide + NADP(+) + H2O. The catalysed reaction is rifamycin SV + NADH + O2 = rifamycin SV para-naphthoquinone carboxamide + NAD(+) + H2O. Functionally, monooxygenase that can modify rifampicin, thereby inactivating its antibiotic activity. Inactivates a broad range of rifamycin antibiotics. The chain is Rifampicin monooxygenase from Streptomyces venezuelae (strain ATCC 10712 / CBS 650.69 / DSM 40230 / JCM 4526 / NBRC 13096 / PD 04745).